A 177-amino-acid polypeptide reads, in one-letter code: Large ribosomal subunit protein uL6 (177 aa).

The protein belongs to the universal ribosomal protein uL6 family. As to quaternary structure, part of the 50S ribosomal subunit.

In terms of biological role, this protein binds to the 23S rRNA, and is important in its secondary structure. It is located near the subunit interface in the base of the L7/L12 stalk, and near the tRNA binding site of the peptidyltransferase center. The protein is Large ribosomal subunit protein uL6 of Rickettsia prowazekii (strain Madrid E).